A 461-amino-acid polypeptide reads, in one-letter code: MAEKSSKKLWGGRFSGATDPLMAEFNKSIYSGKEMCEEDVIGSMAYAKALCQKNVISEEELNSILKGLEQIQREWNSGQFVLEPSDEDVHTANERRLTEIIGDVAGKLHTGRSRNDQVTTDLRLWLCRKIKEVEVYVINLLKVFTNRAEMEIDVIMSGYTHLQRAQPVRWSHFLMSHALPLLGDLGRLRQLYTRVSQLPLGAGALAGNPFNVDREFLRKELGFEGIIMNSMNAVGDRDFVIEFMFWAGMVMLHISRFAEDLIIYSSSEFGFVTLSDAYSTGSSIMPQKKNPDSLELLRGKSGRVLGDMIGLMITVKGTPTTYNKDLQEDKEPLFDAFKTVSDSLQILTGVVSTLTINPTKIAESLTPDLLATDLAEYLVRKGLPFRQTHHISGSAVRMAEERNTTLDKLSVSDLQSLHPLFDEDVSKVFNYEESVEKRCSIGGTAKHCVQEQIEHIRSAIL.

Positions 28, 115, and 160 each coordinate 2-(N(omega)-L-arginino)succinate. The active-site Proton acceptor is the His161. The active-site Proton donor is the Ser282. Asn290, Tyr322, Gln327, and Lys330 together coordinate 2-(N(omega)-L-arginino)succinate.

The protein belongs to the lyase 1 family. Argininosuccinate lyase subfamily. In terms of assembly, homotetramer.

It carries out the reaction 2-(N(omega)-L-arginino)succinate = fumarate + L-arginine. The protein operates within amino-acid biosynthesis; L-arginine biosynthesis; L-arginine from L-ornithine and carbamoyl phosphate: step 3/3. The sequence is that of Argininosuccinate lyase (arg7) from Schizosaccharomyces pombe (strain 972 / ATCC 24843) (Fission yeast).